A 158-amino-acid chain; its full sequence is SsrA-binding protein (158 aa).

The tract at residues 131-158 (GKKTHDKRETEKKRDWNREKARLLRDRG) is disordered. Basic and acidic residues predominate over residues 136-158 (DKRETEKKRDWNREKARLLRDRG).

This sequence belongs to the SmpB family.

It localises to the cytoplasm. Its function is as follows. Required for rescue of stalled ribosomes mediated by trans-translation. Binds to transfer-messenger RNA (tmRNA), required for stable association of tmRNA with ribosomes. tmRNA and SmpB together mimic tRNA shape, replacing the anticodon stem-loop with SmpB. tmRNA is encoded by the ssrA gene; the 2 termini fold to resemble tRNA(Ala) and it encodes a 'tag peptide', a short internal open reading frame. During trans-translation Ala-aminoacylated tmRNA acts like a tRNA, entering the A-site of stalled ribosomes, displacing the stalled mRNA. The ribosome then switches to translate the ORF on the tmRNA; the nascent peptide is terminated with the 'tag peptide' encoded by the tmRNA and targeted for degradation. The ribosome is freed to recommence translation, which seems to be the essential function of trans-translation. The protein is SsrA-binding protein of Brucella abortus biovar 1 (strain 9-941).